A 55-amino-acid chain; its full sequence is Large ribosomal subunit protein bL33 (55 aa).

This sequence belongs to the bacterial ribosomal protein bL33 family.

This chain is Large ribosomal subunit protein bL33, found in Xanthomonas axonopodis pv. citri (strain 306).